The sequence spans 423 residues: MSASAVYVLDLKGKVLICRNYRGDVDMSEVEHFMPILMEKEEEGMLSPILAHGGVRFMWIKHNNLYLVATSKKNACVSLVFSFLYKVVQVFSEYFKELEEESIRDNFVIIYELLDELMDFGYPQTTDSKILQEYITQEGHKLETGAPRPPATVTNAVSWRSEGIKYRKNEVFLDVIEAVNLLVSANGNVLRSEIVGSIKMRVFLSGMPELRLGLNDKVLFDNTGRGKSKSVELEDVKFHQCVRLSRFENDRTISFIPPDGEFELMSYRLNTHVKPLIWIESVIEKHSHSRIEYMVKAKSQFKRRSTANNVEIHIPVPNDADSPKFKTTVGSVKWVPENSEIVWSVKSFPGGKEYLMRAHFGLPSVEAEDKEGKPPISVKFEIPYFTTSGIQVRYLKIIEKSGYQALPWVRYITQNGDYQLRTQ.

An N-acetylserine modification is found at Ser-2. Phosphothreonine is present on residues Thr-152, Thr-154, and Thr-223. The 254-residue stretch at 168-421 (KNEVFLDVIE…ITQNGDYQLR (254 aa)) folds into the MHD domain.

The protein belongs to the adaptor complexes medium subunit family. In terms of assembly, adaptor protein complex 1 (AP-1) is a heterotetramer composed of two large adaptins (gamma-type subunit AP1G1 and beta-type subunit AP1B1), a medium adaptin (mu-type subunit AP1M1 or AP1M2) and a small adaptin (sigma-type subunit AP1S1 or AP1S2 or AP1S3). Interacts with MARCHF11. Post-translationally, phosphorylation of membrane-bound AP1M1/AP1M2 increases its affinity for sorting signals.

It localises to the golgi apparatus. The protein resides in the cytoplasmic vesicle. Its subcellular location is the clathrin-coated vesicle membrane. In terms of biological role, subunit of clathrin-associated adaptor protein complex 1 that plays a role in protein sorting in the trans-Golgi network (TGN) and endosomes. The AP complexes mediate the recruitment of clathrin to membranes and the recognition of sorting signals within the cytosolic tails of transmembrane cargo molecules. This Mus musculus (Mouse) protein is AP-1 complex subunit mu-1 (Ap1m1).